Here is a 452-residue protein sequence, read N- to C-terminus: Serine--tRNA ligase (452 aa).

L-serine is bound at residue 251-253; that stretch reads TSE. 282-284 serves as a coordination point for ATP; it reads RSE. E305 is a binding site for L-serine. 369–372 contributes to the ATP binding site; it reads EISS. An L-serine-binding site is contributed by S404.

This sequence belongs to the class-II aminoacyl-tRNA synthetase family. Type-1 seryl-tRNA synthetase subfamily. As to quaternary structure, homodimer. The tRNA molecule binds across the dimer.

Its subcellular location is the cytoplasm. The enzyme catalyses tRNA(Ser) + L-serine + ATP = L-seryl-tRNA(Ser) + AMP + diphosphate + H(+). The catalysed reaction is tRNA(Sec) + L-serine + ATP = L-seryl-tRNA(Sec) + AMP + diphosphate + H(+). It functions in the pathway aminoacyl-tRNA biosynthesis; selenocysteinyl-tRNA(Sec) biosynthesis; L-seryl-tRNA(Sec) from L-serine and tRNA(Sec): step 1/1. Catalyzes the attachment of serine to tRNA(Ser). Is also able to aminoacylate tRNA(Sec) with serine, to form the misacylated tRNA L-seryl-tRNA(Sec), which will be further converted into selenocysteinyl-tRNA(Sec). The protein is Serine--tRNA ligase of Albidiferax ferrireducens (strain ATCC BAA-621 / DSM 15236 / T118) (Rhodoferax ferrireducens).